Here is a 132-residue protein sequence, read N- to C-terminus: Large ribosomal subunit protein bL17 (132 aa).

This sequence belongs to the bacterial ribosomal protein bL17 family. In terms of assembly, part of the 50S ribosomal subunit. Contacts protein L32.

This Ehrlichia canis (strain Jake) protein is Large ribosomal subunit protein bL17.